The chain runs to 196 residues: dTDP-4-dehydro-6-deoxyglucose 3-epimerase (196 aa).

Substrate-binding positions include R21, E26, 45–47 (QVN), and R57. H60 acts as the Proton acceptor in catalysis. Substrate contacts are provided by K70 and R117. Y130 functions as the Proton donor in the catalytic mechanism. Residues E141 and R166 each contribute to the substrate site.

This sequence belongs to the dTDP-4-dehydrorhamnose 3,5-epimerase family. Homodimer.

It carries out the reaction dTDP-4-dehydro-6-deoxy-alpha-D-glucose = dTDP-4-dehydro-6-deoxy-alpha-D-allose. The protein operates within antibiotic biosynthesis. Involved in the biosynthesis of dTDP-6-deoxy-D-allose, an intermediate in the biosynthesis of mycinose, which is one of the two unusual sugars attached to the 16-membered macrolactone ring of the aglycone antibiotic chalcomycin. Catalyzes the conversion of dTDP-4-oxo-6-deoxyglucose to dTDP-4-oxo-6-deoxyallose, via a C-3 epimerization. This is dTDP-4-dehydro-6-deoxyglucose 3-epimerase from Streptomyces bikiniensis.